The following is a 114-amino-acid chain: Probable 4-amino-4-deoxy-L-arabinose-phosphoundecaprenol flippase subunit ArnE (114 aa).

3 helical membrane passes run 38-58 (LTLR…LLWL), 64-84 (LPLS…TLAA), and 94-114 (LRHW…SWHL). Residues 43–112 (LAIAVVSLGL…IMFGILLMSW (70 aa)) form the EamA domain.

Belongs to the ArnE family. As to quaternary structure, heterodimer of ArnE and ArnF.

It is found in the cell inner membrane. Its pathway is bacterial outer membrane biogenesis; lipopolysaccharide biosynthesis. Functionally, translocates 4-amino-4-deoxy-L-arabinose-phosphoundecaprenol (alpha-L-Ara4N-phosphoundecaprenol) from the cytoplasmic to the periplasmic side of the inner membrane. This is Probable 4-amino-4-deoxy-L-arabinose-phosphoundecaprenol flippase subunit ArnE from Yersinia pseudotuberculosis serotype O:3 (strain YPIII).